The chain runs to 840 residues: Axin-2 (840 aa).

The disordered stretch occupies residues 1–75 (MSSAVLVTLL…EGRASPDSPL (75 aa)). Positions 21 to 30 (APRPPVPGEE) match the Tankyrase-binding motif motif. A compositionally biased stretch (polar residues) spans 42 to 55 (KVQSTKPMPVSSNA). The span at 56–69 (RRNEDGLGEPEGRA) shows a compositional bias: basic and acidic residues. Residues 81–200 (SLHSLLGDQD…LTSDIYLEYV (120 aa)) form the RGS domain. Disordered regions lie at residues 300–363 (SELS…KEMT), 398–435 (IRED…EEDP), 447–485 (LKTP…LLPT), 572–614 (RGGT…GDRS), and 715–745 (ASQQ…EDHK). Positions 303-318 (SSDALTDDSMSMTDSS) are enriched in low complexity. The interval 327–413 (MGSKKQLQRE…KEGSEQALSS (87 aa)) is interaction with GSK3B. Residues 413–478 (SRDGAPVQHP…HHHQHHHHQQ (66 aa)) are interaction with beta-catenin. Basic residues predominate over residues 468–478 (DHHHQHHHHQQ). The 83-residue stretch at 758–840 (ASELVVTYFF…RILGKVERID (83 aa)) folds into the DIX domain.

Interacts with glycogen synthase kinase-3 beta (GSK3B) and beta-catenin. The interaction between axin and beta-catenin occurs via the armadillo repeats contained in beta-catenin. Interacts with SMAD7 and RNF111. Interacts with ANKRD6. Interacts with SIAH1. Interacts with SIAH2. In terms of processing, ADP-ribosylated by tankyrase TNKS and TNKS2. Poly-ADP-ribosylated protein is recognized by RNF146, followed by ubiquitination and subsequent activation of the Wnt signaling pathway. Post-translationally, ubiquitinated by RNF146 when poly-ADP-ribosylated, leading to its degradation and subsequent activation of the Wnt signaling pathway. Deubiquitinated by USP34, deubiquitinated downstream of beta-catenin stabilization step: deubiquitination is important Wnt signaling to positively regulate beta-catenin (CTNBB1)-mediated transcription. Probably phosphorylated by GSK3B and dephosphorylated by PP2A. In terms of tissue distribution, expressed in Tcf7-positive innate-like T-cells (at protein level).

It is found in the cytoplasm. In terms of biological role, inhibitor of the Wnt signaling pathway. Down-regulates beta-catenin. Probably facilitate the phosphorylation of beta-catenin and APC by GSK3B. The chain is Axin-2 from Mus musculus (Mouse).